The chain runs to 80 residues: Large ribosomal subunit protein bL31 (80 aa).

Cys16, Cys18, Cys36, and Cys39 together coordinate Zn(2+).

The protein belongs to the bacterial ribosomal protein bL31 family. Type A subfamily. As to quaternary structure, part of the 50S ribosomal subunit. Requires Zn(2+) as cofactor.

Functionally, binds the 23S rRNA. In Methylacidiphilum infernorum (isolate V4) (Methylokorus infernorum (strain V4)), this protein is Large ribosomal subunit protein bL31.